The primary structure comprises 387 residues: 3-ketoacyl-CoA thiolase (387 aa).

The Acyl-thioester intermediate role is filled by Cys91. Catalysis depends on proton acceptor residues His343 and Cys373.

It belongs to the thiolase-like superfamily. Thiolase family. Heterotetramer of two alpha chains (FadB) and two beta chains (FadA).

It localises to the cytoplasm. The enzyme catalyses an acyl-CoA + acetyl-CoA = a 3-oxoacyl-CoA + CoA. Its pathway is lipid metabolism; fatty acid beta-oxidation. Its function is as follows. Catalyzes the final step of fatty acid oxidation in which acetyl-CoA is released and the CoA ester of a fatty acid two carbons shorter is formed. This chain is 3-ketoacyl-CoA thiolase, found in Salmonella paratyphi A (strain ATCC 9150 / SARB42).